A 252-amino-acid polypeptide reads, in one-letter code: Chitooligosaccharide deacetylase (252 aa).

Mg(2+) contacts are provided by H61 and H125.

The protein belongs to the YdjC deacetylase family. ChbG subfamily. Homodimer. It depends on Mg(2+) as a cofactor.

The protein resides in the cytoplasm. It carries out the reaction N,N'-diacetylchitobiose + H2O = N-acetyl-beta-D-glucosaminyl-(1-&gt;4)-D-glucosamine + acetate. The enzyme catalyses diacetylchitobiose-6'-phosphate + H2O = N'-monoacetylchitobiose-6'-phosphate + acetate. It functions in the pathway glycan degradation; chitin degradation. Involved in the degradation of chitin. ChbG is essential for growth on the acetylated chitooligosaccharides chitobiose and chitotriose but is dispensable for growth on cellobiose and chitosan dimer, the deacetylated form of chitobiose. Deacetylation of chitobiose-6-P and chitotriose-6-P is necessary for both the activation of the chb promoter by the regulatory protein ChbR and the hydrolysis of phosphorylated beta-glucosides by the phospho-beta-glucosidase ChbF. Catalyzes the removal of only one acetyl group from chitobiose-6-P to yield monoacetylchitobiose-6-P, the inducer of ChbR and the substrate of ChbF. This Shigella flexneri serotype 5b (strain 8401) protein is Chitooligosaccharide deacetylase.